A 526-amino-acid polypeptide reads, in one-letter code: Arylsulfatase G (526 aa).

An N-terminal signal peptide occupies residues 1 to 16 (MGWLFLKVLLVGMVFS). Residues Asp-44, Asp-45, and Cys-84 each coordinate Ca(2+). Catalysis depends on Cys-84, which acts as the Nucleophile. Position 84 is a 3-oxoalanine (Cys) (Cys-84). A glycan (N-linked (GlcNAc...) asparagine) is linked at Asn-117. Lys-137 is a binding site for substrate. Residue His-139 is part of the active site. Ser-162 provides a ligand contact to substrate. An N-linked (GlcNAc...) asparagine glycan is attached at Asn-215. A substrate-binding site is contributed by His-251. Ca(2+) is bound by residues Asp-302 and Asn-303. N-linked (GlcNAc...) asparagine glycosylation is found at Asn-356 and Asn-497.

This sequence belongs to the sulfatase family. It depends on Ca(2+) as a cofactor. N-glycosylated with both high mannose and complex type sugars. In terms of processing, the conversion to 3-oxoalanine (also known as C-formylglycine, FGly), of a serine or cysteine residue in prokaryotes and of a cysteine residue in eukaryotes, is critical for catalytic activity. Post-translationally, 63-kDa precursor undergoes proteolytic processing in two steps, yielding two fragments in the first step (apparent molecular masses of 44 and 18 kDa). In the second step, the 44-kDa fragment is processed further to the 34- and 10-kDa chains. The 10-kDa chain is a cleavage product of the 44-kDa fragment but linked to the 18-kDa chain through a disulfide bridge.

It is found in the lysosome. It carries out the reaction an aryl sulfate + H2O = a phenol + sulfate + H(+). It catalyses the reaction Hydrolysis of the 3-sulfate groups of the N-sulfo-D-glucosamine 3-O-sulfate units of heparin.. Its function is as follows. Displays arylsulfatase activity at acidic pH towards the artificial substrate p-nitrocatechol sulfate. Catalyzes the hydrolysis of the 3-sulfate groups of the N-sulfo-D-glucosamine 3-O-sulfate units of heparin. In Rattus norvegicus (Rat), this protein is Arylsulfatase G (Arsg).